Here is a 490-residue protein sequence, read N- to C-terminus: Apocarotenoid-15,15'-oxygenase (490 aa).

Histidine 183 is a binding site for Fe cation. Serine 206 is a binding site for substrate. A Fe cation-binding site is contributed by histidine 238. Phenylalanine 303 is a binding site for substrate. The Fe cation site is built by histidine 304 and histidine 484.

The protein belongs to the carotenoid oxygenase family. Fe(2+) serves as cofactor.

It carries out the reaction all-trans-8'-apo-beta-carotenal + O2 = (2E,4E,6E)-2,6-dimethylocta-2,4,6-trienedial + all-trans-retinal. Functionally, cleaves a number of carotenals and carotenols in the all-trans configuration at the 15-15' double bond producing retinal or retinol, respectively. Also shows activity toward lycopenals and the corresponding alcohols. Does not cleave beta-carotene or lycopene. The polypeptide is Apocarotenoid-15,15'-oxygenase (Synechocystis sp. (strain ATCC 27184 / PCC 6803 / Kazusa)).